The primary structure comprises 1241 residues: Nephrin (1241 aa).

A signal peptide spans 1 to 22 (MALGTTLRASLLLLGLLTEGLA). Residues 23-1055 (QLAIPASVPR…EDQLPTEPPS (1033 aa)) are Extracellular-facing. 6 Ig-like C2-type domains span residues 27–130 (PASV…VILS), 143–234 (EAGT…SFTV), 242–333 (PPVI…HGIT), 340–434 (PSAI…KSLI), 440–540 (PAQK…TQLA), and 544–635 (PPTN…ETVS). A glycan (N-linked (GlcNAc...) asparagine) is linked at Asn-40. Cystine bridges form between Cys-53/Cys-111, Cys-160/Cys-217, and Cys-265/Cys-317. N-linked (GlcNAc...) asparagine glycosylation is found at Asn-356 and Asn-401. An intrachain disulfide couples Cys-361 to Cys-417. Ser-432 carries the phosphoserine modification. A disulfide bridge connects residues Cys-465 and Cys-528. Asn-547, Asn-553, Asn-564, Asn-577, Asn-680, and Asn-708 each carry an N-linked (GlcNAc...) asparagine glycan. A disulfide bridge connects residues Cys-567 and Cys-623. 2 consecutive Ig-like C2-type domains span residues 740-832 (PTIR…LLRL) and 838-939 (PQVE…VSIS). 2 disulfides stabilise this stretch: Cys-761–Cys-816 and Cys-863–Cys-920. Asn-908 is a glycosylation site (N-linked (GlcNAc...) asparagine). One can recognise a Fibronectin type-III domain in the interval 943–1038 (PPSGLKVVSL…TQLPITTPGL (96 aa)). The disordered stretch occupies residues 1025-1057 (ADKGTQLPITTPGLHQPSGEPEDQLPTEPPSGP). Residues 1056-1076 (GPSGLPLLPVLFALGGLLLLS) traverse the membrane as a helical segment. Over 1077–1241 (NASCVGGVLW…LPFELRGHLV (165 aa)) the chain is Cytoplasmic. At Ser-1098 the chain carries Phosphoserine. Residues 1099 to 1114 (EKTEAGSEEDRVRNEY) show a composition bias toward basic and acidic residues. The interval 1099 to 1137 (EKTEAGSEEDRVRNEYEESQWTGERDTQSSTVSTTEAEP) is disordered. Phosphothreonine is present on Thr-1101. Ser-1105 is subject to Phosphoserine. The segment at 1160–1241 (RGFTGEDEDM…LPFELRGHLV (82 aa)) is binds to NPHS2. Tyr-1193 carries the phosphotyrosine; by FYN modification.

It belongs to the immunoglobulin superfamily. In terms of assembly, interacts with CD2AP (via C-terminal domain). Interacts with MAGI1 (via PDZ 2 and 3 domains) forming a tripartite complex with IGSF5/JAM4. Interacts with DDN; the interaction is direct. Self-associates (via the Ig-like domains). Also interacts (via the Ig-like domains) with KIRREL1/NEPH1 and KIRREL2; the interaction with KIRREL1 is dependent on KIRREL1 glycosylation. Interacts with KIRREL3. Forms a complex with ACTN4, CASK, IQGAP1, MAGI2, SPTAN1 and SPTBN1. Interacts with NPHS2. Interacts with phosphatidylinositol 3-kinase regulatory subunit PIK3R1; the interaction is reduced by high glucose levels. Post-translationally, phosphorylated at Tyr-1193 by FYN, leading to the recruitment and activation of phospholipase C-gamma-1/PLCG1. Tyrosine phosphorylation is reduced by high glucose levels. Dephosphorylated by tensin TNS2 which leads to reduced binding of NPHN1 to PIK3R1. As to expression, specifically expressed in podocytes of kidney glomeruli.

The protein resides in the cell membrane. Its function is as follows. Seems to play a role in the development or function of the kidney glomerular filtration barrier. Regulates glomerular vascular permeability. May anchor the podocyte slit diaphragm to the actin cytoskeleton. Plays a role in skeletal muscle formation through regulation of myoblast fusion. The protein is Nephrin (NPHS1) of Homo sapiens (Human).